The sequence spans 192 residues: Imidazole glycerol phosphate synthase subunit HisH (192 aa).

Residues 1 to 192 (MIAIIDYGLG…QALKGGFIND (192 aa)) enclose the Glutamine amidotransferase type-1 domain. Cys77 acts as the Nucleophile in catalysis. Residues His169 and Glu171 contribute to the active site.

As to quaternary structure, heterodimer of HisH and HisF.

It localises to the cytoplasm. The enzyme catalyses 5-[(5-phospho-1-deoxy-D-ribulos-1-ylimino)methylamino]-1-(5-phospho-beta-D-ribosyl)imidazole-4-carboxamide + L-glutamine = D-erythro-1-(imidazol-4-yl)glycerol 3-phosphate + 5-amino-1-(5-phospho-beta-D-ribosyl)imidazole-4-carboxamide + L-glutamate + H(+). The catalysed reaction is L-glutamine + H2O = L-glutamate + NH4(+). It functions in the pathway amino-acid biosynthesis; L-histidine biosynthesis; L-histidine from 5-phospho-alpha-D-ribose 1-diphosphate: step 5/9. In terms of biological role, IGPS catalyzes the conversion of PRFAR and glutamine to IGP, AICAR and glutamate. The HisH subunit catalyzes the hydrolysis of glutamine to glutamate and ammonia as part of the synthesis of IGP and AICAR. The resulting ammonia molecule is channeled to the active site of HisF. The protein is Imidazole glycerol phosphate synthase subunit HisH of Staphylococcus epidermidis (strain ATCC 12228 / FDA PCI 1200).